The sequence spans 165 residues: Serine/threonine-protein phosphatase 2A 56 kDa regulatory subunit epsilon isoform (165 aa).

The interval 1–41 (MSSAPTTPPSVDKVDGFSRKSVRKARQKRSQSSSQFRSQGK) is disordered. Ser-2 carries the post-translational modification N-acetylserine. Thr-7 carries the post-translational modification Phosphothreonine. Basic residues predominate over residues 20 to 29 (KSVRKARQKR). 3 positions are modified to phosphoserine: Ser-30, Ser-32, and Ser-34. The span at 30–41 (SQSSSQFRSQGK) shows a compositional bias: low complexity.

The protein belongs to the phosphatase 2A regulatory subunit B56 family. As to quaternary structure, PP2A consists of a common heterodimeric core enzyme, composed of a 36 kDa catalytic subunit (subunit C) and a 65 kDa constant regulatory subunit (PR65 or subunit A), that associates with a variety of regulatory subunits. Proteins that associate with the core dimer include three families of regulatory subunits B (the R2/B/PR55/B55, R3/B''/PR72/PR130/PR59 and R5/B'/B56 families), the 48 kDa variable regulatory subunit, viral proteins, and cell signaling molecules. Interacts with SGO1. Found in a complex with at least ARL2, PPP2CB; PPP2R1A, PPP2R2A, PPP2R5E and TBCD. Highly expressed in testis, lung and brain.

It is found in the cytoplasm. In terms of biological role, the B regulatory subunit might modulate substrate selectivity and catalytic activity, and might also direct the localization of the catalytic enzyme to a particular subcellular compartment. The sequence is that of Serine/threonine-protein phosphatase 2A 56 kDa regulatory subunit epsilon isoform (PPP2R5E) from Oryctolagus cuniculus (Rabbit).